Consider the following 154-residue polypeptide: Transcription antitermination protein NusB (154 aa).

The protein belongs to the NusB family.

Functionally, involved in transcription antitermination. Required for transcription of ribosomal RNA (rRNA) genes. Binds specifically to the boxA antiterminator sequence of the ribosomal RNA (rrn) operons. In Rickettsia typhi (strain ATCC VR-144 / Wilmington), this protein is Transcription antitermination protein NusB.